The following is a 252-amino-acid chain: Ribosomal RNA small subunit methyltransferase J (252 aa).

Residues 101 to 102, 117 to 118, 153 to 154, and D171 each bind S-adenosyl-L-methionine; these read RD, ER, and SS.

This sequence belongs to the methyltransferase superfamily. RsmJ family.

The protein resides in the cytoplasm. The catalysed reaction is guanosine(1516) in 16S rRNA + S-adenosyl-L-methionine = N(2)-methylguanosine(1516) in 16S rRNA + S-adenosyl-L-homocysteine + H(+). Its function is as follows. Specifically methylates the guanosine in position 1516 of 16S rRNA. The chain is Ribosomal RNA small subunit methyltransferase J from Salmonella paratyphi B (strain ATCC BAA-1250 / SPB7).